A 39-amino-acid chain; its full sequence is Histone H2A (39 aa).

Residues 1 to 18 (AGRGKQGGKVRAKAKTRS) show a composition bias toward basic residues. Residues 1–24 (AGRGKQGGKVRAKAKTRSSRAGLQ) form a disordered region. At lysine 5 the chain carries N6-(2-hydroxyisobutyryl)lysine. At lysine 5 the chain carries N6-acetyllysine. At lysine 9 the chain carries N6-(2-hydroxyisobutyryl)lysine; alternate. At lysine 9 the chain carries N6-lactoyllysine; alternate. At lysine 9 the chain carries N6-succinyllysine. Residues lysine 13 and lysine 15 each participate in a glycyl lysine isopeptide (Lys-Gly) (interchain with G-Cter in ubiquitin) cross-link. Lysine 36 bears the N6-(2-hydroxyisobutyryl)lysine; alternate mark.

It belongs to the histone H2A family. In terms of assembly, the nucleosome is a histone octamer containing two molecules each of H2A, H2B, H3 and H4 assembled in one H3-H4 heterotetramer and two H2A-H2B heterodimers. The octamer wraps approximately 147 bp of DNA. Monoubiquitination of C-terminus gives a specific tag for epigenetic transcriptional repression. Following DNA double-strand breaks (DSBs), it is ubiquitinated through 'Lys-63' linkage of ubiquitin moieties.

Its subcellular location is the nucleus. The protein resides in the chromosome. Functionally, core component of nucleosome. Nucleosomes wrap and compact DNA into chromatin, limiting DNA accessibility to the cellular machineries which require DNA as a template. Histones thereby play a central role in transcription regulation, DNA repair, DNA replication and chromosomal stability. DNA accessibility is regulated via a complex set of post-translational modifications of histones, also called histone code, and nucleosome remodeling. Buforins are strong antimicrobial activities in vitro against a broad-spectrum of microorganisms including fungi. Buforin II is more potent than buforin I. The chain is Histone H2A from Bufo gargarizans (Asian toad).